Reading from the N-terminus, the 732-residue chain is Catalase-peroxidase (732 aa).

Residues 1–10 (MDAKTDDKAG) are compositionally biased toward basic and acidic residues. Positions 1 to 26 (MDAKTDDKAGKCPVAHGPAPRGNRDW) are disordered. Residues 95 to 217 (WHSAGTYRTT…LGAVQMGLIY (123 aa)) constitute a cross-link (tryptophyl-tyrosyl-methioninium (Trp-Tyr) (with M-243)). The Proton acceptor role is filled by histidine 96. A cross-link (tryptophyl-tyrosyl-methioninium (Tyr-Met) (with W-95)) is located at residues 217 to 243 (YVNPEGPNGNPDPLGSAKDIRETFARM). Histidine 258 contributes to the heme b binding site.

This sequence belongs to the peroxidase family. Peroxidase/catalase subfamily. In terms of assembly, homodimer or homotetramer. It depends on heme b as a cofactor. Formation of the three residue Trp-Tyr-Met cross-link is important for the catalase, but not the peroxidase activity of the enzyme.

It carries out the reaction H2O2 + AH2 = A + 2 H2O. The catalysed reaction is 2 H2O2 = O2 + 2 H2O. Bifunctional enzyme with both catalase and broad-spectrum peroxidase activity. The polypeptide is Catalase-peroxidase (Rhodopseudomonas palustris (strain BisB18)).